A 507-amino-acid polypeptide reads, in one-letter code: MVNIRPEEISSVIFRQIEQYNQEVRVFNIGTVLQVGDGIARIYGLNEVMAGELVEFEDGTVGIALNLESNNVGAVLMGDGLTIQEGSSVKATGKIAQIPVSDAYLGRVVNALAQPIDGKGQIPASESRLIESPAPGIISRRSAYEPMQTGLIAIDSMIPIGRGQRELIIGDRQTGKTAVATDTILNQKGQNVICVYVAIGQKASSVAQVVNTFEEQGAMEYTIVVAETANSPATLQYLAPYTGAALAEYFMYRQQHTLIIYDDLSKQAQAYRQMSLLLRRPPGREAYPGDVFYLHSRLLERAAKLSSQLGEGSMTALPVVETQAGDVSAYIPTNVISITDGQTFLSADSSNAGIRPAINVGISVSRVGSAAQIKAMKQVAGKLKLELAQFAELEAFAQFASDLDKATQNQLARGQRLRELLKQSQSAPLTVEEQVATIYTGVNGYSDILEIGQVKKFLVQFREYLITNKPKFAEIICSTKVFTEQAEIILKEAIEEHTELFLLQEQK.

Residue 170–177 coordinates ATP; that stretch reads GDRQTGKT.

The protein belongs to the ATPase alpha/beta chains family. In terms of assembly, F-type ATPases have 2 components, CF(1) - the catalytic core - and CF(0) - the membrane proton channel. CF(1) has five subunits: alpha(3), beta(3), gamma(1), delta(1), epsilon(1). CF(0) has four main subunits: a, b, b' and c.

The protein localises to the plastid. Its subcellular location is the chloroplast thylakoid membrane. The enzyme catalyses ATP + H2O + 4 H(+)(in) = ADP + phosphate + 5 H(+)(out). Functionally, produces ATP from ADP in the presence of a proton gradient across the membrane. The alpha chain is a regulatory subunit. This Huperzia lucidula (Shining clubmoss) protein is ATP synthase subunit alpha, chloroplastic.